The primary structure comprises 259 residues: Glandular kallikrein-10 (259 aa).

A signal peptide spans 1 to 18 (MWFLILFLALSLGGIDAA). A propeptide spans 19-24 (PPGQSR) (activation peptide). The region spanning 25 to 256 (IVGGYKCEKN…FTSWIKEVMK (232 aa)) is the Peptidase S1 domain. 5 disulfide bridges follow: C31–C171, C48–C64, C150–C217, C182–C196, and C207–C232. Residue H63 is the Charge relay system of the active site. Residues N91 and N106 are each glycosylated (N-linked (GlcNAc...) asparagine). The active-site Charge relay system is D118. The Charge relay system role is filled by S211.

This sequence belongs to the peptidase S1 family. Kallikrein subfamily. Heterodimer of a light chain and heavy chain linked by a disulfide bond. In terms of processing, probably N- and O-glycosylated. Kidney and submandibular gland, where it is found in the granular convoluted tubule and striated duct cells. It is likely that the enzyme is mainly synthesized in the granular convoluted tubules and then transferred to other tissues by release into the vasculature or interstitial space.

It catalyses the reaction Preferential cleavage of Arg-|-Xaa bonds in small molecule substrates. Highly selective action to release kallidin (lysyl-bradykinin) from kininogen involves hydrolysis of Met-|-Xaa or Leu-|-Xaa.. Glandular kallikreins cleave Met-Lys and Arg-Ser bonds in kininogen to release Lys-bradykinin. This protein may be involved in the regulation of renal function. The protein is Glandular kallikrein-10 (Klk10) of Rattus norvegicus (Rat).